Reading from the N-terminus, the 228-residue chain is 7-cyano-7-deazaguanine synthase (228 aa).

7 to 17 (LSGGMDSLVTT) serves as a coordination point for ATP. Zn(2+) is bound by residues Cys-187, Cys-195, Cys-198, and Cys-201.

It belongs to the QueC family. Zn(2+) is required as a cofactor.

The catalysed reaction is 7-carboxy-7-deazaguanine + NH4(+) + ATP = 7-cyano-7-deazaguanine + ADP + phosphate + H2O + H(+). It functions in the pathway purine metabolism; 7-cyano-7-deazaguanine biosynthesis. Functionally, catalyzes the ATP-dependent conversion of 7-carboxy-7-deazaguanine (CDG) to 7-cyano-7-deazaguanine (preQ(0)). The polypeptide is 7-cyano-7-deazaguanine synthase (Chlorobium chlorochromatii (strain CaD3)).